The following is a 266-amino-acid chain: Putative pyruvate, phosphate dikinase regulatory protein (266 aa).

147 to 154 (GLSRTSKT) serves as a coordination point for ADP.

The protein belongs to the pyruvate, phosphate/water dikinase regulatory protein family. PDRP subfamily.

It carries out the reaction N(tele)-phospho-L-histidyl/L-threonyl-[pyruvate, phosphate dikinase] + ADP = N(tele)-phospho-L-histidyl/O-phospho-L-threonyl-[pyruvate, phosphate dikinase] + AMP + H(+). The catalysed reaction is N(tele)-phospho-L-histidyl/O-phospho-L-threonyl-[pyruvate, phosphate dikinase] + phosphate + H(+) = N(tele)-phospho-L-histidyl/L-threonyl-[pyruvate, phosphate dikinase] + diphosphate. Its function is as follows. Bifunctional serine/threonine kinase and phosphorylase involved in the regulation of the pyruvate, phosphate dikinase (PPDK) by catalyzing its phosphorylation/dephosphorylation. The polypeptide is Putative pyruvate, phosphate dikinase regulatory protein (Clostridium perfringens (strain SM101 / Type A)).